Consider the following 578-residue polypeptide: Proteasome-associated ATPase (578 aa).

Residues 8–84 (TAAELRNQVR…LKEEVDRLAQ (77 aa)) are a coiled coil. Position 267–272 (267–272 (GCGKTL)) interacts with ATP. Residues 577–578 (YL) form a docks into pockets in the proteasome alpha-ring region.

The protein belongs to the AAA ATPase family. In terms of assembly, homohexamer. Assembles into a hexameric ring structure that caps the 20S proteasome core. Strongly interacts with the prokaryotic ubiquitin-like protein Pup through a hydrophobic interface; the interacting region of ARC lies in its N-terminal coiled-coil domain. There is one Pup binding site per ARC hexamer ring. Upon ATP-binding, the C-terminus of ARC interacts with the alpha-rings of the proteasome core, possibly by binding to the intersubunit pockets.

It participates in protein degradation; proteasomal Pup-dependent pathway. ATPase which is responsible for recognizing, binding, unfolding and translocation of pupylated proteins into the bacterial 20S proteasome core particle. May be essential for opening the gate of the 20S proteasome via an interaction with its C-terminus, thereby allowing substrate entry and access to the site of proteolysis. Thus, the C-termini of the proteasomal ATPase may function like a 'key in a lock' to induce gate opening and therefore regulate proteolysis. This chain is Proteasome-associated ATPase, found in Kribbella flavida (strain DSM 17836 / JCM 10339 / NBRC 14399).